The primary structure comprises 306 residues: D-alanine--D-alanine ligase (306 aa).

Residues 101–303 (KYLWQGCGLP…FSQLVARILE (203 aa)) form the ATP-grasp domain. Residue 134-189 (IDALGLPLFVKPSREGSSVGISRVNQASELQAALQEAFRFDDEVLVEAFLSGPEYT) coordinates ATP. Mg(2+) contacts are provided by aspartate 257, glutamate 270, and asparagine 272.

It belongs to the D-alanine--D-alanine ligase family. Mg(2+) serves as cofactor. It depends on Mn(2+) as a cofactor.

The protein localises to the cytoplasm. It carries out the reaction 2 D-alanine + ATP = D-alanyl-D-alanine + ADP + phosphate + H(+). The protein operates within cell wall biogenesis; peptidoglycan biosynthesis. In terms of biological role, cell wall formation. This Erwinia tasmaniensis (strain DSM 17950 / CFBP 7177 / CIP 109463 / NCPPB 4357 / Et1/99) protein is D-alanine--D-alanine ligase.